The sequence spans 439 residues: Ribosomal protein uS12 methylthiotransferase RimO (439 aa).

Positions 7 to 119 (KQLCLISLGC…IDILIAKKQN (113 aa)) constitute an MTTase N-terminal domain. 6 residues coordinate [4Fe-4S] cluster: Cys16, Cys50, Cys82, Cys151, Cys155, and Cys158. The Radical SAM core domain maps to 137 to 368 (TGSSVHAYVK…ALKHQNHSFK (232 aa)).

The protein belongs to the methylthiotransferase family. RimO subfamily. Requires [4Fe-4S] cluster as cofactor.

Its subcellular location is the cytoplasm. The enzyme catalyses L-aspartate(89)-[ribosomal protein uS12]-hydrogen + (sulfur carrier)-SH + AH2 + 2 S-adenosyl-L-methionine = 3-methylsulfanyl-L-aspartate(89)-[ribosomal protein uS12]-hydrogen + (sulfur carrier)-H + 5'-deoxyadenosine + L-methionine + A + S-adenosyl-L-homocysteine + 2 H(+). Catalyzes the methylthiolation of an aspartic acid residue of ribosomal protein uS12. The protein is Ribosomal protein uS12 methylthiotransferase RimO of Helicobacter pylori (strain HPAG1).